Here is a 243-residue protein sequence, read N- to C-terminus: tRNA (guanine-N(1)-)-methyltransferase (243 aa).

S-adenosyl-L-methionine-binding positions include glycine 113 and 133–138 (IGDFVL).

It belongs to the RNA methyltransferase TrmD family. In terms of assembly, homodimer.

The protein resides in the cytoplasm. It carries out the reaction guanosine(37) in tRNA + S-adenosyl-L-methionine = N(1)-methylguanosine(37) in tRNA + S-adenosyl-L-homocysteine + H(+). In terms of biological role, specifically methylates guanosine-37 in various tRNAs. This Bacillus licheniformis (strain ATCC 14580 / DSM 13 / JCM 2505 / CCUG 7422 / NBRC 12200 / NCIMB 9375 / NCTC 10341 / NRRL NRS-1264 / Gibson 46) protein is tRNA (guanine-N(1)-)-methyltransferase.